The primary structure comprises 121 residues: Natriuretic peptides B (121 aa).

Positions 1 to 26 (MDLQKVLPQMILLLLFLNLSPLGGHS) are cleaved as a signal peptide. C99 and C115 form a disulfide bridge.

Belongs to the natriuretic peptide family. Post-translationally, the precursor molecule is proteolytically cleaved by the endoprotease Furin to produce brain natriuretic peptide 45. May undergo further proteolytic cleavage by various proteases such as DPP4, MME and possibly FAP, to give rise to a variety of shorter peptides. May be cleaved at Ser-91 by the prolyl endopeptidase FAP (seprase) activity (in vitro). May be degraded by IDE. During IDE degradation, the resulting products initially increase the activation of NPR1 and can also stimulate NPR2 to produce cGMP before the fragments are completely degraded and inactivated by IDE (in vitro). As to expression, expressed in the atria and ventricles, but at much lower levels than NPPA. Expression levels in the ventricles are slightly higher than in the atria. Very low levels of expression detected in the brain, hypothalamus, lung and aorta. Atria (at protein level). Cardiocytes (at protein level).

Its subcellular location is the secreted. Functionally, cardiac hormone that plays a key role in mediating cardio-renal homeostasis. May also function as a paracrine antifibrotic factor in the heart. Acts by specifically binding and stimulating NPR1 to produce cGMP, which in turn activates effector proteins that drive various biological responses. Likely involved in regulating the extracellular fluid volume and maintaining the fluid-electrolyte balance through natriuresis, diuresis, kaluresis and chloruresis. The protein is Natriuretic peptides B (Nppb) of Rattus norvegicus (Rat).